A 192-amino-acid chain; its full sequence is Peroxiredoxin tpx1 (192 aa).

One can recognise a Thioredoxin domain in the interval 3–161 (LQIGKPAPDF…ALRLLDAFQF (159 aa)). Residue Cys48 is the Cysteine sulfenic acid (-SOH) intermediate of the active site. 2 positions are modified to phosphoserine: Ser105 and Ser148.

Belongs to the peroxiredoxin family. AhpC/Prx1 subfamily. In terms of assembly, homodimer; disulfide-linked, upon oxidation. Interacts with srx1 in response to oxidative stress. Interacts with pap1 via transient disulfide linkages. Post-translationally, the enzyme can be inactivated by further oxidation of the cysteine sulfenic acid (C(P)-SOH) to sulphinic acid (C(P)-SO2H) instead of its condensation to a disulfide bond. It can be reactivated by forming a transient disulfide bond with sulfiredoxin srx1, which reduces the cysteine sulfinic acid in an ATP- and Mg-dependent manner.

Its subcellular location is the cytoplasm. It is found in the nucleus. It carries out the reaction a hydroperoxide + [thioredoxin]-dithiol = an alcohol + [thioredoxin]-disulfide + H2O. Its function is as follows. Thiol-specific peroxidase that catalyzes the reduction of hydrogen peroxide and organic hydroperoxides to water and alcohols, respectively. Plays a role in cell protection against oxidative stress by detoxifying peroxides and as sensor of hydrogen peroxide-mediated signaling events. Relays hydrogen peroxide as a signal to the transcription factor pap1 by inducing the formation of intramolecular disulfide bonds in pap1, which causes its nuclear accumulation and activation. Reduced by srx1 and this regulation acts as a molecular switch controlling the transcriptional response to hydrogen peroxide. This is Peroxiredoxin tpx1 (tpx1) from Schizosaccharomyces pombe (strain 972 / ATCC 24843) (Fission yeast).